Reading from the N-terminus, the 845-residue chain is BLOC-2 complex member HPS5 homolog (845 aa).

Residues 239–268 (PTEEDLEDAKSMEGSDDNDNDQRSSPSGVK) are disordered.

The protein belongs to the HPS5 family.

Functionally, has a role in the biogenesis of eye pigment granules. Eye pigment granules are specialized forms of late endosomes or lysosomes. Biogenesis of pigment granules in the eye requires molecular components required for protein delivery to lysosomes. This is BLOC-2 complex member HPS5 homolog from Aedes aegypti (Yellowfever mosquito).